Here is a 295-residue protein sequence, read N- to C-terminus: CRISPR-associated endonuclease Cas1 2 (295 aa).

Mn(2+) contacts are provided by glutamate 155, histidine 215, and glutamate 230.

It belongs to the CRISPR-associated endonuclease Cas1 family. In terms of assembly, homodimer, forms a heterotetramer with a Cas2 homodimer. It depends on Mg(2+) as a cofactor. Requires Mn(2+) as cofactor.

In terms of biological role, CRISPR (clustered regularly interspaced short palindromic repeat), is an adaptive immune system that provides protection against mobile genetic elements (viruses, transposable elements and conjugative plasmids). CRISPR clusters contain spacers, sequences complementary to antecedent mobile elements, and target invading nucleic acids. CRISPR clusters are transcribed and processed into CRISPR RNA (crRNA). Acts as a dsDNA endonuclease. Involved in the integration of spacer DNA into the CRISPR cassette. In Pyrobaculum aerophilum (strain ATCC 51768 / DSM 7523 / JCM 9630 / CIP 104966 / NBRC 100827 / IM2), this protein is CRISPR-associated endonuclease Cas1 2.